The primary structure comprises 102 residues: Large ribosomal subunit protein bL36m (102 aa).

Belongs to the bacterial ribosomal protein bL36 family. In terms of assembly, component of the mitochondrial ribosome large subunit (39S) which comprises a 16S rRNA and about 50 distinct proteins.

It is found in the mitochondrion. This is Large ribosomal subunit protein bL36m (Mrpl36) from Mus musculus (Mouse).